A 583-amino-acid polypeptide reads, in one-letter code: Radixin (583 aa).

The region spanning 5-295 is the FERM domain; that stretch reads INVRVTTMDA…GNHELYMRRR (291 aa). Residue 60–63 participates in a 1,2-diacyl-sn-glycero-3-phospho-(1D-myo-inositol) binding; the sequence is KLNK. Lys83 carries the post-translational modification N6-succinyllysine. Lys278 lines the a 1,2-diacyl-sn-glycero-3-phospho-(1D-myo-inositol) pocket. Disordered regions lie at residues 310–336, 374–407, and 458–526; these read REEK…AEKE, ELDQ…AKQA, and KTKE…RVNK. The segment covering 374 to 400 has biased composition (basic and acidic residues); sequence ELDQERKRAKEEAERLEKERRAAEEAK. Residues 469-480 show a composition bias toward pro residues; the sequence is APPPPPPPPVVP. 2 stretches are compositionally biased toward basic and acidic residues: residues 483 to 492 and 506 to 525; these read ENEHDEHDEN and MNHR…ERVN. Thr564 is modified (phosphothreonine; by ROCK2).

Interacts with CPNE1 (via VWFA domain) and CPNE4 (via VWFA domain). Binds NHERF1. Interacts with NHERF1, NHERF2, LAYN, MME/NEP and ICAM2. Interacts (via FERM domain) with SPN/CD43 cytoplasmic tail. Interacts with CD44. Interacts with CLIC5; may work together in a complex which also includes EZR and MYO6 to stabilize linkages between the plasma membrane and subjacent actin cytoskeleton at the base of stereocilia. In terms of processing, phosphorylated by tyrosine-protein kinases. Phosphorylation by ROCK2 suppresses the head-to-tail association of the N-terminal and C-terminal halves resulting in an opened conformation which is capable of actin and membrane-binding.

It localises to the cell membrane. Its subcellular location is the cytoplasm. The protein localises to the cytoskeleton. It is found in the cleavage furrow. The protein resides in the cell projection. It localises to the microvillus. Its subcellular location is the stereocilium. Its activity is regulated as follows. A head-to-tail association, of the N-terminal and C-terminal halves results in a closed conformation (inactive form) which is incapable of actin or membrane-binding. Functionally, probably plays a crucial role in the binding of the barbed end of actin filaments to the plasma membrane. This is Radixin (RDX) from Sus scrofa (Pig).